The chain runs to 231 residues: ATP phosphoribosyltransferase (231 aa).

It belongs to the ATP phosphoribosyltransferase family. Short subfamily. Heteromultimer composed of HisG and HisZ subunits.

It is found in the cytoplasm. It catalyses the reaction 1-(5-phospho-beta-D-ribosyl)-ATP + diphosphate = 5-phospho-alpha-D-ribose 1-diphosphate + ATP. The protein operates within amino-acid biosynthesis; L-histidine biosynthesis; L-histidine from 5-phospho-alpha-D-ribose 1-diphosphate: step 1/9. Catalyzes the condensation of ATP and 5-phosphoribose 1-diphosphate to form N'-(5'-phosphoribosyl)-ATP (PR-ATP). Has a crucial role in the pathway because the rate of histidine biosynthesis seems to be controlled primarily by regulation of HisG enzymatic activity. In Brucella melitensis biotype 2 (strain ATCC 23457), this protein is ATP phosphoribosyltransferase.